We begin with the raw amino-acid sequence, 176 residues long: MATATDRAPHQVQVHTPTTQRVDVPRRGYDVSGGGIKTLLPERGPSTSQIIAVLVGVPTGGTLLLLSGLSLLGTIIGLAIATPVFIFFSPVIVPAVVTIGLAVTGILTAGACGLTGLMSLSWMINFIRQVHGTTVPDQLDSVKRRMADMADYVGQKTKDAGQEIQTKAQDVKRSSS.

Ala2 carries the N-acetylalanine; alternate modification. The next 3 helical transmembrane spans lie at 50–70, 75–95, and 96–116; these read IIAV…SGLS, IIGL…IVPA, and VVTI…GLTG. A disordered region spans residues 156–176; sequence KTKDAGQEIQTKAQDVKRSSS.

The protein belongs to the oleosin family. As to expression, expressed in seeds (at protein level).

It localises to the lipid droplet. The protein resides in the membrane. Its function is as follows. May have a structural role to stabilize the lipid body during desiccation of the seed by preventing coalescence of the oil. Probably interacts with both lipid and phospholipid moieties of lipid bodies. May also provide recognition signals for specific lipase anchorage in lipolysis during seedling growth. The polypeptide is Oleosin Ara h 14.0103 (Arachis hypogaea (Peanut)).